A 98-amino-acid chain; its full sequence is MTIDANHYDVIVAPVITEKATMASEYNKVVFKVARKATKPQIKEAVEKLFDVKVKSVNTLVRKGKTKVFRGRLGSHSDNKRAVVTLEEGHRIDVTTGL.

This sequence belongs to the universal ribosomal protein uL23 family. In terms of assembly, part of the 50S ribosomal subunit. Contacts protein L29, and trigger factor when it is bound to the ribosome.

One of the early assembly proteins it binds 23S rRNA. One of the proteins that surrounds the polypeptide exit tunnel on the outside of the ribosome. Forms the main docking site for trigger factor binding to the ribosome. The chain is Large ribosomal subunit protein uL23 from Nitrobacter winogradskyi (strain ATCC 25391 / DSM 10237 / CIP 104748 / NCIMB 11846 / Nb-255).